Here is an 88-residue protein sequence, read N- to C-terminus: Large ribosomal subunit protein bL27 (88 aa).

The segment at 1 to 23 is disordered; that stretch reads MAHKKGTGSTRNGRDSNSKRLGV.

This sequence belongs to the bacterial ribosomal protein bL27 family.

The protein is Large ribosomal subunit protein bL27 of Synechococcus sp. (strain CC9902).